A 249-amino-acid polypeptide reads, in one-letter code: uncharacterized protein (249 aa).

The protein belongs to the AIM2 family.

Its subcellular location is the cytoplasm. It is found in the nucleus. This is an uncharacterized protein from Schizosaccharomyces pombe (strain 972 / ATCC 24843) (Fission yeast).